A 115-amino-acid chain; its full sequence is Large ribosomal subunit protein bL20 (115 aa).

The protein belongs to the bacterial ribosomal protein bL20 family.

Functionally, binds directly to 23S ribosomal RNA and is necessary for the in vitro assembly process of the 50S ribosomal subunit. It is not involved in the protein synthesizing functions of that subunit. This Chlorobium phaeobacteroides (strain DSM 266 / SMG 266 / 2430) protein is Large ribosomal subunit protein bL20.